The primary structure comprises 476 residues: MRVLHVCSELFPLLKTGGLADVIGALPAAQLAEGADVRIILPAFPDLRRGIPETVLVREIDTFAGRVALRYGHYRGIGIYLIDAPALYDRAGSPYHDASLYAYSDNYLRFALLGWMACELACGLDGYWRPEVVHAHDWHAGLTCAYLAARGRPARSVFTVHNLAYQGLFSADHLSELHLPAEFFQIYGLEFYGQISYLKAGLFFADHVTTVSPTYAKEITQPAFGYGMEGLLQALVRQGRLTGILNGVDSDIWDPQSDTLLPTRYDAENLQAKAINKTHLQTAMGLQLAENKPIFAVVSRLTVQKGLDLVLEALPELLALGGQLVVLGSGDATLQEAFLAAAAEHSGQVGVQIGYHEAFSHRIIAGSDVILVPSRFEPCGLTQLYGLKYGTLPLVRHTGGLADTVVDCALENLADGSASGFVFNECEAQALVKAIRRAFVLWSRPKHWRHVQRHAMRLDFGWQLAAVDYLSLYRRL.

An ADP-alpha-D-glucose-binding site is contributed by Lys-15.

The protein belongs to the glycosyltransferase 1 family. Bacterial/plant glycogen synthase subfamily.

It carries out the reaction [(1-&gt;4)-alpha-D-glucosyl](n) + ADP-alpha-D-glucose = [(1-&gt;4)-alpha-D-glucosyl](n+1) + ADP + H(+). The protein operates within glycan biosynthesis; glycogen biosynthesis. Synthesizes alpha-1,4-glucan chains using ADP-glucose. The chain is Glycogen synthase from Yersinia pseudotuberculosis serotype IB (strain PB1/+).